The following is a 722-amino-acid chain: Pre-B-cell leukemia transcription factor-interacting protein 1 (722 aa).

The segment covering M1–S10 has biased composition (polar residues). The interval M1–A180 is disordered. Positions D88–G97 are enriched in basic and acidic residues. S133, S144, S145, and S146 each carry phosphoserine. The residue at position 150 (T150) is a Phosphothreonine. S166 is modified (phosphoserine). 2 coiled-coil regions span residues L266 to D346 and D373 to L401. The segment covering Q442–S453 has biased composition (polar residues). Disordered regions lie at residues Q442–S562 and R691–G722. Composition is skewed to basic and acidic residues over residues H465–V536 and S546–S559. Residues Q482–W502 carry the Nuclear localization signal motif. Phosphoserine is present on S559. The short motif at D686 to E711 is the Nuclear localization signal element.

In terms of assembly, interacts with ESR1, PBX1, PBX2 and PBX3. Interacts with TEX11.

It is found in the cytoplasm. It localises to the cytoskeleton. The protein resides in the nucleus. In terms of biological role, regulator of pre-B-cell leukemia transcription factors (BPXs) function. Inhibits the binding of PBX1-HOX complex to DNA and blocks the transcriptional activity of E2A-PBX1. Tethers estrogen receptor-alpha (ESR1) to microtubules and allows them to influence estrogen receptors-alpha signaling. The protein is Pre-B-cell leukemia transcription factor-interacting protein 1 (Pbxip1) of Rattus norvegicus (Rat).